The primary structure comprises 248 residues: 2,3-bisphosphoglycerate-dependent phosphoglycerate mutase (248 aa).

Residues 8-15, 21-22, Arg60, 87-90, Lys98, 114-115, and 183-184 contribute to the substrate site; these read RHGESTWN, TG, EKHY, RR, and GN. The active-site Tele-phosphohistidine intermediate is the His9. The Proton donor/acceptor role is filled by Glu87.

The protein belongs to the phosphoglycerate mutase family. BPG-dependent PGAM subfamily.

The enzyme catalyses (2R)-2-phosphoglycerate = (2R)-3-phosphoglycerate. It participates in carbohydrate degradation; glycolysis; pyruvate from D-glyceraldehyde 3-phosphate: step 3/5. In terms of biological role, catalyzes the interconversion of 2-phosphoglycerate and 3-phosphoglycerate. The sequence is that of 2,3-bisphosphoglycerate-dependent phosphoglycerate mutase from Elusimicrobium minutum (strain Pei191).